The sequence spans 223 residues: UPF0758 protein Tgr7_0100 (223 aa).

In terms of domain architecture, MPN spans 102–223; that stretch reads ALTSPDDTRR…LVSFAERGLL (122 aa). Zn(2+)-binding residues include H173, H175, and D186. Residues 173–186 carry the JAMM motif motif; it reads HNHPSGVAEPSRSD.

Belongs to the UPF0758 family.

This Thioalkalivibrio sulfidiphilus (strain HL-EbGR7) protein is UPF0758 protein Tgr7_0100.